Reading from the N-terminus, the 172-residue chain is Co-chaperone protein HscB (172 aa).

The 73-residue stretch at 2-74 (DYFTLFGLPI…LKRAEYMLSL (73 aa)) folds into the J domain.

This sequence belongs to the HscB family. As to quaternary structure, interacts with HscA and stimulates its ATPase activity. Interacts with IscU.

In terms of biological role, co-chaperone involved in the maturation of iron-sulfur cluster-containing proteins. Seems to help targeting proteins to be folded toward HscA. This is Co-chaperone protein HscB from Pectobacterium atrosepticum (strain SCRI 1043 / ATCC BAA-672) (Erwinia carotovora subsp. atroseptica).